The sequence spans 277 residues: MNLRNNKLHSSFIQRKAIKVISGINNFNVGQIFKIIHACEISKATYVDVARNPKIVSFIKSISSIPVCVSSIDPRALYESVLAGADLVEIGNFDCFYTNGVYLSNDQIIAIVKQVKYLLPYTDICVTIPHILKLHEQIYLAQKLESLGINLLQTEGSITNFSNEKLLEAKKINDNILYSTSMACCALSSVYSISKVVSLPVIASSGINGISASVALSYGASGIGIRSSVSKLGNIIDMSNYIDEMIFSTSKKLYDIDQNNLLYMATSNLSLNKCSII.

Belongs to the ycf23 family.

It localises to the plastid. It is found in the chloroplast. This is an uncharacterized protein from Antithamnion sp. (Red alga).